The following is a 342-amino-acid chain: tRNA N6-adenosine threonylcarbamoyltransferase (342 aa).

Residues H114 and H118 each contribute to the Fe cation site. Substrate is bound by residues 136–140 (LVSGG), D169, G182, D186, and N275. D301 contributes to the Fe cation binding site.

Belongs to the KAE1 / TsaD family. Requires Fe(2+) as cofactor.

The protein resides in the cytoplasm. The enzyme catalyses L-threonylcarbamoyladenylate + adenosine(37) in tRNA = N(6)-L-threonylcarbamoyladenosine(37) in tRNA + AMP + H(+). Its function is as follows. Required for the formation of a threonylcarbamoyl group on adenosine at position 37 (t(6)A37) in tRNAs that read codons beginning with adenine. Is involved in the transfer of the threonylcarbamoyl moiety of threonylcarbamoyl-AMP (TC-AMP) to the N6 group of A37, together with TsaE and TsaB. TsaD likely plays a direct catalytic role in this reaction. The polypeptide is tRNA N6-adenosine threonylcarbamoyltransferase (Streptococcus pyogenes serotype M2 (strain MGAS10270)).